The following is a 307-amino-acid chain: 1D-myo-inositol 2-acetamido-2-deoxy-alpha-D-glucopyranoside deacetylase 1 (307 aa).

Residues H21, D24, and H157 each contribute to the Zn(2+) site.

This sequence belongs to the MshB deacetylase family. Zn(2+) serves as cofactor.

The catalysed reaction is 1D-myo-inositol 2-acetamido-2-deoxy-alpha-D-glucopyranoside + H2O = 1D-myo-inositol 2-amino-2-deoxy-alpha-D-glucopyranoside + acetate. Its function is as follows. Catalyzes the deacetylation of 1D-myo-inositol 2-acetamido-2-deoxy-alpha-D-glucopyranoside (GlcNAc-Ins) in the mycothiol biosynthesis pathway. This is 1D-myo-inositol 2-acetamido-2-deoxy-alpha-D-glucopyranoside deacetylase 1 from Frankia casuarinae (strain DSM 45818 / CECT 9043 / HFP020203 / CcI3).